The primary structure comprises 543 residues: Mitochondrial distribution and morphology protein 34 (543 aa).

The SMP-LTD domain occupies 1-202 (MSFNVNWNSL…LPTLLHKVSL (202 aa)). The tract at residues 519–543 (AFSHNDPSITPFELPPPPYHQLSRA) is disordered.

This sequence belongs to the MDM34 family. As to quaternary structure, component of the ER-mitochondria encounter structure (ERMES) or MDM complex, composed of MMM1, MDM10, MDM12 and MDM34.

The protein localises to the mitochondrion outer membrane. Component of the ERMES/MDM complex, which serves as a molecular tether to connect the endoplasmic reticulum (ER) and mitochondria. Components of this complex are involved in the control of mitochondrial shape and protein biogenesis, and function in nonvesicular lipid trafficking between the ER and mitochondria. MDM34 is required for the interaction of the ER-resident membrane protein MMM1 and the outer mitochondrial membrane-resident beta-barrel protein MDM10. In Clavispora lusitaniae (strain ATCC 42720) (Yeast), this protein is Mitochondrial distribution and morphology protein 34.